A 560-amino-acid chain; its full sequence is S100P-binding protein (560 aa).

2 disordered regions span residues 259 to 292 (SDIP…ESTP) and 313 to 400 (SSSS…GKSF). The span at 313-352 (SSSSLQLPETSLASSTEPSPSLQLSASSVTAMNGQNNSNK) shows a compositional bias: polar residues. Residues 378–387 (QKVEPKKNKP) are compositionally biased toward basic and acidic residues.

Its subcellular location is the nucleus. In Xenopus laevis (African clawed frog), this protein is S100P-binding protein (s100pbp).